The chain runs to 92 residues: Em-like protein GEA6 (92 aa).

Basic and acidic residues-rich tracts occupy residues 1-18 (MASQQEKKQLDERAKKGE) and 37-51 (AEGRSRGGQTRKEQL). The disordered stretch occupies residues 1-92 (MASQQEKKQL…IDESKFRTKT (92 aa)).

The protein belongs to the small hydrophilic plant seed protein family. Present only in nearly dry and dry seeds.

Functionally, it is thought to provide protection for the cytoplasm during the desiccation stage of embryo development. In Arabidopsis thaliana (Mouse-ear cress), this protein is Em-like protein GEA6 (EM6).